Consider the following 218-residue polypeptide: Adenylate kinase (218 aa).

10 to 15 contacts ATP; sequence GAGKGT. The segment at 30-59 is NMP; it reads STGDMLRAAVQAQTPVGIEAKKVMDAGKLV. AMP-binding positions include Thr-31, Arg-36, 57–59, 85–88, and Gln-92; these read KLV and GFPR. The segment at 122–159 is LID; that stretch reads GRRVHLSSGRTYHVRFNPPKKEGLDDLTGEPLVQREDD. Residues Arg-123 and 132 to 133 each bind ATP; that span reads TY. AMP-binding residues include Arg-156 and Arg-167. Residue Gly-203 participates in ATP binding.

Belongs to the adenylate kinase family. Monomer.

The protein localises to the cytoplasm. The enzyme catalyses AMP + ATP = 2 ADP. It functions in the pathway purine metabolism; AMP biosynthesis via salvage pathway; AMP from ADP: step 1/1. Functionally, catalyzes the reversible transfer of the terminal phosphate group between ATP and AMP. Plays an important role in cellular energy homeostasis and in adenine nucleotide metabolism. In Chlorobium phaeobacteroides (strain DSM 266 / SMG 266 / 2430), this protein is Adenylate kinase.